The primary structure comprises 592 residues: A-type ATP synthase subunit A (592 aa).

An ATP-binding site is contributed by 231–238; sequence GGFGTGKT.

Belongs to the ATPase alpha/beta chains family. As to quaternary structure, has multiple subunits with at least A(3), B(3), C, D, E, F, H, I and proteolipid K(x).

The protein localises to the cell membrane. The catalysed reaction is ATP + H2O + 4 H(+)(in) = ADP + phosphate + 5 H(+)(out). Its function is as follows. Component of the A-type ATP synthase that produces ATP from ADP in the presence of a proton gradient across the membrane. The A chain is the catalytic subunit. In Staphylothermus marinus (strain ATCC 43588 / DSM 3639 / JCM 9404 / F1), this protein is A-type ATP synthase subunit A.